The primary structure comprises 29 residues: Dermaseptin-1.2TR (29 aa).

Valine amide is present on Val-29.

As to expression, expressed by the skin glands.

The protein localises to the secreted. In terms of biological role, has antimicrobial activity. This chain is Dermaseptin-1.2TR, found in Phyllomedusa trinitatis (Trinidad leaf frog).